The chain runs to 151 residues: Deoxyuridine 5'-triphosphate nucleotidohydrolase (151 aa).

Residues Arg-70–Gly-72, Asn-83, Leu-87–Asp-89, and Met-97 contribute to the substrate site.

Belongs to the dUTPase family. In terms of assembly, homotrimer. Requires Mg(2+) as cofactor.

It catalyses the reaction dUTP + H2O = dUMP + diphosphate + H(+). The protein operates within pyrimidine metabolism; dUMP biosynthesis; dUMP from dCTP (dUTP route): step 2/2. Functionally, this enzyme is involved in nucleotide metabolism: it produces dUMP, the immediate precursor of thymidine nucleotides and it decreases the intracellular concentration of dUTP so that uracil cannot be incorporated into DNA. The polypeptide is Deoxyuridine 5'-triphosphate nucleotidohydrolase (Escherichia coli O7:K1 (strain IAI39 / ExPEC)).